The sequence spans 192 residues: UPF0149 protein YPO0911/y3298/YP_3608 (192 aa).

The protein belongs to the UPF0149 family.

In Yersinia pestis, this protein is UPF0149 protein YPO0911/y3298/YP_3608.